A 334-amino-acid polypeptide reads, in one-letter code: Ornithine carbamoyltransferase (334 aa).

Carbamoyl phosphate-binding positions include 57–60 (STRT), Gln-84, Arg-108, and 135–138 (HPTQ). Residues Asn-168, Asp-232, and 236–237 (SM) contribute to the L-ornithine site. Carbamoyl phosphate-binding positions include 274–275 (CL) and Arg-321.

This sequence belongs to the aspartate/ornithine carbamoyltransferase superfamily. OTCase family.

The protein resides in the cytoplasm. It carries out the reaction carbamoyl phosphate + L-ornithine = L-citrulline + phosphate + H(+). Its pathway is amino-acid degradation; L-arginine degradation via ADI pathway; carbamoyl phosphate from L-arginine: step 2/2. Functionally, reversibly catalyzes the transfer of the carbamoyl group from carbamoyl phosphate (CP) to the N(epsilon) atom of ornithine (ORN) to produce L-citrulline. The sequence is that of Ornithine carbamoyltransferase from Haemophilus influenzae (strain PittGG).